Consider the following 163-residue polypeptide: Nucleotide-binding protein RER_17110 (163 aa).

It belongs to the YajQ family.

Its function is as follows. Nucleotide-binding protein. This Rhodococcus erythropolis (strain PR4 / NBRC 100887) protein is Nucleotide-binding protein RER_17110.